The sequence spans 78 residues: DNA-directed RNA polymerase subunit Rpo5 (78 aa).

This sequence belongs to the archaeal Rpo5/eukaryotic RPB5 RNA polymerase subunit family. In terms of assembly, part of the RNA polymerase complex.

It localises to the cytoplasm. The enzyme catalyses RNA(n) + a ribonucleoside 5'-triphosphate = RNA(n+1) + diphosphate. In terms of biological role, DNA-dependent RNA polymerase (RNAP) catalyzes the transcription of DNA into RNA using the four ribonucleoside triphosphates as substrates. The sequence is that of DNA-directed RNA polymerase subunit Rpo5 from Methanothrix thermoacetophila (strain DSM 6194 / JCM 14653 / NBRC 101360 / PT) (Methanosaeta thermophila).